The sequence spans 133 residues: ATP synthase epsilon chain, chloroplastic (133 aa).

It belongs to the ATPase epsilon chain family. F-type ATPases have 2 components, CF(1) - the catalytic core - and CF(0) - the membrane proton channel. CF(1) has five subunits: alpha(3), beta(3), gamma(1), delta(1), epsilon(1). CF(0) has three main subunits: a, b and c.

Its subcellular location is the plastid. The protein localises to the chloroplast thylakoid membrane. In terms of biological role, produces ATP from ADP in the presence of a proton gradient across the membrane. The protein is ATP synthase epsilon chain, chloroplastic of Solanum lycopersicum (Tomato).